The primary structure comprises 145 residues: Large ribosomal subunit protein uL16 (145 aa).

The span at 1–17 (MLMPKRVKHRKVQRGRM) shows a compositional bias: basic residues. The tract at residues 1-20 (MLMPKRVKHRKVQRGRMKGV) is disordered.

The protein belongs to the universal ribosomal protein uL16 family. As to quaternary structure, part of the 50S ribosomal subunit.

Its function is as follows. Binds 23S rRNA and is also seen to make contacts with the A and possibly P site tRNAs. In Acetivibrio thermocellus (strain ATCC 27405 / DSM 1237 / JCM 9322 / NBRC 103400 / NCIMB 10682 / NRRL B-4536 / VPI 7372) (Clostridium thermocellum), this protein is Large ribosomal subunit protein uL16.